A 268-amino-acid polypeptide reads, in one-letter code: Hydroxyethylthiazole kinase (268 aa).

Met-45 is a binding site for substrate. ATP is bound by residues Arg-121 and Thr-167. Gly-194 provides a ligand contact to substrate.

The protein belongs to the Thz kinase family. It depends on Mg(2+) as a cofactor.

It catalyses the reaction 5-(2-hydroxyethyl)-4-methylthiazole + ATP = 4-methyl-5-(2-phosphooxyethyl)-thiazole + ADP + H(+). It functions in the pathway cofactor biosynthesis; thiamine diphosphate biosynthesis; 4-methyl-5-(2-phosphoethyl)-thiazole from 5-(2-hydroxyethyl)-4-methylthiazole: step 1/1. Catalyzes the phosphorylation of the hydroxyl group of 4-methyl-5-beta-hydroxyethylthiazole (THZ). This Bacillus cereus (strain ZK / E33L) protein is Hydroxyethylthiazole kinase.